Reading from the N-terminus, the 232-residue chain is Demethylmenaquinone methyltransferase (232 aa).

Residues T58, D79, and 104 to 105 (NA) each bind S-adenosyl-L-methionine.

Belongs to the class I-like SAM-binding methyltransferase superfamily. MenG/UbiE family.

It carries out the reaction a 2-demethylmenaquinol + S-adenosyl-L-methionine = a menaquinol + S-adenosyl-L-homocysteine + H(+). It functions in the pathway quinol/quinone metabolism; menaquinone biosynthesis; menaquinol from 1,4-dihydroxy-2-naphthoate: step 2/2. Its function is as follows. Methyltransferase required for the conversion of demethylmenaquinol (DMKH2) to menaquinol (MKH2). This chain is Demethylmenaquinone methyltransferase, found in Bacillus licheniformis (strain ATCC 14580 / DSM 13 / JCM 2505 / CCUG 7422 / NBRC 12200 / NCIMB 9375 / NCTC 10341 / NRRL NRS-1264 / Gibson 46).